Here is a 518-residue protein sequence, read N- to C-terminus: Protein nucleotidyltransferase YdiU (518 aa).

Positions 1 to 10 (MTHLRFDNRL) are enriched in basic and acidic residues. A disordered region spans residues 1-23 (MTHLRFDNRLRQQLPGDPEEGSR). The ATP site is built by glycine 100, glycine 102, arginine 103, lysine 123, aspartate 135, glycine 136, arginine 193, and arginine 200. Aspartate 270 serves as the catalytic Proton acceptor. Mg(2+)-binding residues include asparagine 271 and aspartate 280. Aspartate 280 provides a ligand contact to ATP.

This sequence belongs to the SELO family. Mg(2+) serves as cofactor. It depends on Mn(2+) as a cofactor.

The catalysed reaction is L-seryl-[protein] + ATP = 3-O-(5'-adenylyl)-L-seryl-[protein] + diphosphate. It carries out the reaction L-threonyl-[protein] + ATP = 3-O-(5'-adenylyl)-L-threonyl-[protein] + diphosphate. It catalyses the reaction L-tyrosyl-[protein] + ATP = O-(5'-adenylyl)-L-tyrosyl-[protein] + diphosphate. The enzyme catalyses L-histidyl-[protein] + UTP = N(tele)-(5'-uridylyl)-L-histidyl-[protein] + diphosphate. The catalysed reaction is L-seryl-[protein] + UTP = O-(5'-uridylyl)-L-seryl-[protein] + diphosphate. It carries out the reaction L-tyrosyl-[protein] + UTP = O-(5'-uridylyl)-L-tyrosyl-[protein] + diphosphate. Functionally, nucleotidyltransferase involved in the post-translational modification of proteins. It can catalyze the addition of adenosine monophosphate (AMP) or uridine monophosphate (UMP) to a protein, resulting in modifications known as AMPylation and UMPylation. The chain is Protein nucleotidyltransferase YdiU from Xanthomonas axonopodis pv. citri (strain 306).